The chain runs to 195 residues: Imidazoleglycerol-phosphate dehydratase (195 aa).

This sequence belongs to the imidazoleglycerol-phosphate dehydratase family.

It localises to the cytoplasm. The catalysed reaction is D-erythro-1-(imidazol-4-yl)glycerol 3-phosphate = 3-(imidazol-4-yl)-2-oxopropyl phosphate + H2O. Its pathway is amino-acid biosynthesis; L-histidine biosynthesis; L-histidine from 5-phospho-alpha-D-ribose 1-diphosphate: step 6/9. This Jannaschia sp. (strain CCS1) protein is Imidazoleglycerol-phosphate dehydratase.